The primary structure comprises 329 residues: 4-methyl-2-oxopentanoate reductase A (329 aa).

NAD(+)-binding positions include 162–163 (GI), 240–242 (TAR), and D266. R242 is a catalytic residue. Residue E271 is part of the active site. H289 functions as the Proton donor in the catalytic mechanism.

This sequence belongs to the D-isomer specific 2-hydroxyacid dehydrogenase family.

It carries out the reaction (2R)-hydroxy-4-methylpentanoate + NADP(+) = 4-methyl-2-oxopentanoate + NADPH + H(+). It catalyses the reaction a (2R)-2-hydroxycarboxylate + NADP(+) = a 2-oxocarboxylate + NADPH + H(+). Its function is as follows. 4-methyl-2-oxopentanoate (MOA) reductase that reduces MOA, a possible intermediate in leucine synthesis, to D-leucate in a NADPH- or NADH-dependent manner, but with a preference for NADPH. In addition to MOA, shows broad substrate specificity toward 2-keto acids. In Aspergillus oryzae (strain ATCC 42149 / RIB 40) (Yellow koji mold), this protein is 4-methyl-2-oxopentanoate reductase A.